The primary structure comprises 375 residues: Ferredoxin--NADP reductase, root-type isozyme, chloroplastic (375 aa).

The N-terminal 60 residues, 1 to 60 (MAHSALSQVSVAVPLQTDSSFRRSTFKATSITFSDRSSWISMPPIDLKAAPSRNQHIVCM), are a transit peptide targeting the chloroplast. Positions 91-219 (KEPYTATIVS…TGPSGKIMLL (129 aa)) constitute an FAD-binding FR-type domain. FAD contacts are provided by residues 151-154 (RLYL), 172-174 (CVR), Tyr178, 193-195 (VCS), and Thr235. Arg174 contacts NADP(+). NADP(+)-binding positions include Thr235, 266 to 267 (VA), 296 to 297 (SR), Lys306, 334 to 335 (GL), and Glu373.

Belongs to the ferredoxin--NADP reductase type 1 family. Requires FAD as cofactor.

The protein localises to the plastid. It is found in the chloroplast. It carries out the reaction 2 reduced [2Fe-2S]-[ferredoxin] + NADP(+) + H(+) = 2 oxidized [2Fe-2S]-[ferredoxin] + NADPH. It functions in the pathway energy metabolism; photosynthesis. Functionally, may play a key role in regulating the relative amounts of cyclic and non-cyclic electron flow to meet the demands of the plant for ATP and reducing power. Is involved in nitrate assimilation. The chain is Ferredoxin--NADP reductase, root-type isozyme, chloroplastic from Nicotiana tabacum (Common tobacco).